Consider the following 607-residue polypeptide: Frizzled and smoothened-like protein J (607 aa).

A signal peptide spans 1-26 (MVSNKNLLPIIYIFFIILYFGDVAKS). The Extracellular segment spans residues 27–247 (QYFPLDKGAT…QWRNIYRLSD (221 aa)). Positions 32–182 (DKGATCQKYR…LSYTNTCENT (151 aa)) constitute an FZ domain. 3 cysteine pairs are disulfide-bonded: cysteine 37–cysteine 108, cysteine 50–cysteine 101, and cysteine 127–cysteine 179. 6 N-linked (GlcNAc...) asparagine glycosylation sites follow: asparagine 63, asparagine 133, asparagine 155, asparagine 164, asparagine 190, and asparagine 222. Residues 248-268 (VLSILSCILTLFLVITLGIIN) traverse the membrane as a helical segment. Over 269-276 (PKVSRFDK) the chain is Cytoplasmic. A helical transmembrane segment spans residues 277–297 (INVMLLSSIFLQAFSGALMTF). Asparagine 298 is a glycosylation site (N-linked (GlcNAc...) asparagine). Over 298-330 (NGTENTLCPEDGRFASYIDRMCVATGFLLHGSS) the chain is Extracellular. A helical transmembrane segment spans residues 331–351 (LLVVQWWCVLSFEVWFTIFQV). The Cytoplasmic portion of the chain corresponds to 352–358 (GKKQKDR). A helical transmembrane segment spans residues 359 to 379 (FIYYLVASLIIAWIPPIVSIS). The Extracellular portion of the chain corresponds to 380 to 401 (KNEYSGGPANPFCWLTTFNYRR). A helical transmembrane segment spans residues 402–422 (FAFWLPMGIFLCLGGVFLILL). Topologically, residues 423–451 (MREIYVIVSGNVQSTKESRFKVLKMEAKP) are cytoplasmic. The helical transmembrane segment at 452-472 (IISLIMYFSCLLYLFIYDQWI) threads the bilayer. Residues 473 to 508 (NNHMHVYTDSIPSYALCLLTSTSTNDCLLKAPDITG) are Extracellular-facing. The helical transmembrane segment at 509–529 (LGYFIYSIRVFGVYAFIIYGI) threads the bilayer. Topologically, residues 530–607 (SKKTLQIWKY…VELDSNSDAL (78 aa)) are cytoplasmic. The short motif at 532-537 (KTLQIW) is the Lys-Thr-X-X-X-Trp motif, mediates interaction with the PDZ domain of Dvl family members element. Over residues 559–575 (TAKSSNSNNSSTTNNIS) the composition is skewed to low complexity. Residues 559 to 607 (TAKSSNSNNSSTTNNISVKASSNMEYETRQENENGDSQSVELDSNSDAL) are disordered. The segment covering 593 to 607 (GDSQSVELDSNSDAL) has biased composition (polar residues).

This sequence belongs to the G-protein coupled receptor Fz/Smo family.

It localises to the membrane. This chain is Frizzled and smoothened-like protein J (fslJ-1), found in Dictyostelium discoideum (Social amoeba).